A 141-amino-acid polypeptide reads, in one-letter code: Large ribosomal subunit protein uL16 (141 aa).

It belongs to the universal ribosomal protein uL16 family. In terms of assembly, part of the 50S ribosomal subunit.

In terms of biological role, binds 23S rRNA and is also seen to make contacts with the A and possibly P site tRNAs. The chain is Large ribosomal subunit protein uL16 from Campylobacter jejuni subsp. jejuni serotype O:6 (strain 81116 / NCTC 11828).